A 451-amino-acid polypeptide reads, in one-letter code: MNLEVKKIDTANARLSAKPSIENLEKRYDKIAQKIAQKVKIDGFRRGKVPLSLVKTRYQAQIEQDAQEEMIQEVLKNAFKELGIENKDLIGSPNLTKFEKKDTHFEIEADIGLKPTIVLDKIKECVPSVGVEIPNEEKINERLKQLAKDYAKFVDTDAQRKAQNDDKLTIDFEGFIDNAPFEGGKAENFNLILGSKQMLEDFEKALLGMQAGEEKEFPLIFPSGYHAEHLAGKEALFKVKLHQIQVREALEINDELAKIVLANEENATLKLLKERVEGQLFLENKARLYNEELKEKLIENLDEKIVFDLPKTIIEQEMDLLFRNALYSMQAEEVKSLQESQEKAKEKRESFRNDATKSVKITFIIDALAKEEKIGVHDNEVFQTLYYEAMMTGQNPENLIEQYRKNNMLAAVKMAMIEDRVLAYLLDKNLPKEQQEILEKMRPNAQKTQAG.

Residues 165 to 250 form the PPIase FKBP-type domain; that stretch reads DDKLTIDFEG…LHQIQVREAL (86 aa).

The protein belongs to the FKBP-type PPIase family. Tig subfamily.

The protein resides in the cytoplasm. It catalyses the reaction [protein]-peptidylproline (omega=180) = [protein]-peptidylproline (omega=0). Its function is as follows. Involved in protein export. Acts as a chaperone by maintaining the newly synthesized protein in an open conformation. Functions as a peptidyl-prolyl cis-trans isomerase. This Helicobacter pylori (strain P12) protein is Trigger factor.